We begin with the raw amino-acid sequence, 1413 residues long: ABC-type transporter vrcC (1413 aa).

One can recognise an ABC transporter 1 domain in the interval Val-108–Glu-365. N-linked (GlcNAc...) asparagine glycosylation occurs at Asn-289. Residues Val-476 to Tyr-496 form a helical membrane-spanning segment. N-linked (GlcNAc...) asparagine glycosylation is present at Asn-501. The next 2 helical transmembrane spans lie at Ala-510–Leu-530 and Val-564–Gly-584. Asn-675 carries an N-linked (GlcNAc...) asparagine glycan. A helical membrane pass occupies residues Ile-683–Phe-703. Residues Ser-725–Arg-748 are disordered. Asn-738 is a glycosylation site (N-linked (GlcNAc...) asparagine). The segment covering Ala-739–Arg-748 has biased composition (basic and acidic residues). One can recognise an ABC transporter 2 domain in the interval Phe-761–Gly-1003. 6 helical membrane-spanning segments follow: residues Ile-1105–Leu-1125, Ile-1142–Thr-1162, Leu-1191–Met-1211, Leu-1230–Leu-1250, Leu-1266–Phe-1286, and Val-1290–Val-1310. Asn-1324 carries N-linked (GlcNAc...) asparagine glycosylation. Residues Phe-1378 to Trp-1398 traverse the membrane as a helical segment.

The protein belongs to the ABC transporter superfamily. ABCG family. PDR (TC 3.A.1.205) subfamily.

Its subcellular location is the cell membrane. Functionally, ABC-type transporter; part of the gene cluster that mediates the biosynthesis of the sesterterpene variecolin. VrcC is probably involved in the secretion of variecolin. This is ABC-type transporter vrcC from Aspergillus aculeatus (strain ATCC 16872 / CBS 172.66 / WB 5094).